Consider the following 671-residue polypeptide: Leucine aminopeptidase 2 (671 aa).

Substrate is bound by residues 184-186 (QLE) and 311-316 (PYGGME). Residue histidine 340 participates in Zn(2+) binding. Glutamate 341 acts as the Proton acceptor in catalysis. Zn(2+)-binding residues include histidine 344 and glutamate 363. The active-site Proton donor is tyrosine 429.

Belongs to the peptidase M1 family. Requires Zn(2+) as cofactor.

Its subcellular location is the cytoplasm. It is found in the nucleus. The catalysed reaction is an epoxide + H2O = an ethanediol. Its activity is regulated as follows. Inhibited by 3-(4-benzyloxyphenyl)-2-(R)-amino-1-propanethiol (thioamine) and N-hydroxy-N-(2-(S)-amino-3-(4-benzyloxyphenyl)propyl)-5-carboxypen-tanamide (hydroxamic acid). The aminopeptidase activity is stimulated by LTA(4). In terms of biological role, aminopeptidase that preferentially cleaves di- and tripeptides. Also has low epoxide hydrolase activity (in vitro). Can hydrolyze the epoxide leukotriene LTA(4) but it forms preferentially 5,6-dihydroxy-7,9,11,14-eicosatetraenoic acid rather than the cytokine leukotriene B(4) as the product compared to the homologous mammalian enzyme (in vitro). The sequence is that of Leucine aminopeptidase 2 from Saccharomyces cerevisiae (strain YJM789) (Baker's yeast).